A 417-amino-acid chain; its full sequence is NADH-quinone oxidoreductase subunit D 1 (417 aa).

This sequence belongs to the complex I 49 kDa subunit family. NDH-1 is composed of 14 different subunits. Subunits NuoB, C, D, E, F, and G constitute the peripheral sector of the complex.

The protein resides in the cell membrane. It catalyses the reaction a quinone + NADH + 5 H(+)(in) = a quinol + NAD(+) + 4 H(+)(out). Its function is as follows. NDH-1 shuttles electrons from NADH, via FMN and iron-sulfur (Fe-S) centers, to quinones in the respiratory chain. The immediate electron acceptor for the enzyme in this species is believed to be ubiquinone. Couples the redox reaction to proton translocation (for every two electrons transferred, four hydrogen ions are translocated across the cytoplasmic membrane), and thus conserves the redox energy in a proton gradient. The chain is NADH-quinone oxidoreductase subunit D 1 from Roseiflexus castenholzii (strain DSM 13941 / HLO8).